Here is a 260-residue protein sequence, read N- to C-terminus: MAPKKKGGGKKKKKDDGAEPPHDGSWERAVESGTWEKPVTDLPDANTWPTWGALRERVLTACREIKINNTASLRDAFANELVKLSPPELTLIDLRGSSNLHNFNLSPMTTCPKLTDLDLSECAGLDYVLLQSQTVRSVNLRKNPAITKALIHCPRLNKLSITDCPALETLMLWTDELTELDLTGCNNLSVVKLQCPNLLDSKIPPLKVAPQHVKPSHPPIASLLKENLTTAAHKAAADKEALAGVKDTSDSIIPHVFRPF.

Positions 1–13 (MAPKKKGGGKKKK) are enriched in basic residues. Residues 1 to 43 (MAPKKKGGGKKKKKDDGAEPPHDGSWERAVESGTWEKPVTDLP) form a disordered region. Basic and acidic residues predominate over residues 14–30 (KDDGAEPPHDGSWERAV).

It belongs to the DRC6 family. Component of the nexin-dynein regulatory complex (N-DRC).

It localises to the cytoplasm. The protein resides in the cytoskeleton. The protein localises to the flagellum axoneme. Its function is as follows. Component of the nexin-dynein regulatory complex (N-DRC), a key regulator of ciliary/flagellar motility which maintains the alignment and integrity of the distal axoneme and regulates microtubule sliding in motile axonemes. The polypeptide is Dynein regulatory complex subunit 6 (Chlamydomonas reinhardtii (Chlamydomonas smithii)).